A 183-amino-acid chain; its full sequence is Ribosome rescue factor SmrB (183 aa).

Residues L98–E173 enclose the Smr domain.

It belongs to the SmrB family. As to quaternary structure, associates with collided ribosomes, but not with correctly translating polysomes.

In terms of biological role, acts as a ribosome collision sensor. Detects stalled/collided disomes (pairs of ribosomes where the leading ribosome is stalled and a second ribosome has collided with it) and endonucleolytically cleaves mRNA at the 5' boundary of the stalled ribosome. Stalled/collided disomes form a new interface (primarily via the 30S subunits) that binds SmrB. Cleaved mRNA becomes available for tmRNA ligation, leading to ribosomal subunit dissociation and rescue of stalled ribosomes. The chain is Ribosome rescue factor SmrB from Enterobacter sp. (strain 638).